We begin with the raw amino-acid sequence, 326 residues long: Protoheme IX farnesyltransferase (326 aa).

The next 8 helical transmembrane spans lie at 35–55, 60–80, 106–126, 129–149, 157–177, 185–205, 242–262, and 283–303; these read LIPL…GWPL, LVCT…LNCL, SAFI…VSGV, LAAG…TALL, IVIG…AATG, WLFA…ALLL, GFGV…LLPF, and AKGL…LLIL.

This sequence belongs to the UbiA prenyltransferase family. Protoheme IX farnesyltransferase subfamily.

The protein resides in the cell inner membrane. It catalyses the reaction heme b + (2E,6E)-farnesyl diphosphate + H2O = Fe(II)-heme o + diphosphate. It participates in porphyrin-containing compound metabolism; heme O biosynthesis; heme O from protoheme: step 1/1. In terms of biological role, converts heme B (protoheme IX) to heme O by substitution of the vinyl group on carbon 2 of heme B porphyrin ring with a hydroxyethyl farnesyl side group. This chain is Protoheme IX farnesyltransferase, found in Parasynechococcus marenigrum (strain WH8102).